The chain runs to 59 residues: Ribosome biogenesis protein Nop10 (59 aa).

This sequence belongs to the NOP10 family.

In terms of biological role, involved in ribosome biogenesis; more specifically in 18S rRNA pseudouridylation and in cleavage of pre-rRNA. The polypeptide is Ribosome biogenesis protein Nop10 (Thermococcus gammatolerans (strain DSM 15229 / JCM 11827 / EJ3)).